The primary structure comprises 66 residues: DNA-directed RNA polymerase subunit Rpo10 (66 aa).

Residues C7, C10, C44, and C45 each contribute to the Zn(2+) site.

Belongs to the archaeal Rpo10/eukaryotic RPB10 RNA polymerase subunit family. In terms of assembly, part of the RNA polymerase complex. Zn(2+) serves as cofactor.

It localises to the cytoplasm. The enzyme catalyses RNA(n) + a ribonucleoside 5'-triphosphate = RNA(n+1) + diphosphate. DNA-dependent RNA polymerase (RNAP) catalyzes the transcription of DNA into RNA using the four ribonucleoside triphosphates as substrates. This is DNA-directed RNA polymerase subunit Rpo10 from Pyrobaculum aerophilum (strain ATCC 51768 / DSM 7523 / JCM 9630 / CIP 104966 / NBRC 100827 / IM2).